A 449-amino-acid polypeptide reads, in one-letter code: Protein tweety homolog 1 (449 aa).

Over 1–43 the chain is Extracellular; sequence MSSSHGYRASWWTYILHQVPHTNFQFEVVDNQFAPQEWPYQQA. Residues 44-64 traverse the membrane as a helical segment; it reads LLFLASIAGLCLAISLILICV. Residues 65 to 86 lie on the Cytoplasmic side of the membrane; sequence YLIRFCCCSSQEDDDSKSHRVC. Residues 87–107 form a helical membrane-spanning segment; it reads CVTWSCVAAVIICCAGIGIGF. The Extracellular portion of the chain corresponds to 108–212; sequence YGNSETNDGV…QVNFIEDYRW (105 aa). N128 carries N-linked (GlcNAc...) asparagine glycosylation. Residues 213–233 form a helical membrane-spanning segment; it reads LAYILLLLLDLIICLFTLLGL. Residues 234–238 lie on the Cytoplasmic side of the membrane; sequence AKQIK. A helical transmembrane segment spans residues 239–259; the sequence is WLVIVMTVVSFFVLLLSWGSM. Residues 260–388 are Extracellular-facing; that stretch reads GLEMATAVGL…LKGLCYDGME (129 aa). 2 disulfides stabilise this stretch: C273-C383 and C301-C368. N282 and N353 each carry an N-linked (GlcNAc...) asparagine glycan. A helical membrane pass occupies residues 389 to 409; sequence GILFLLLFSFLSALSFTAAIC. The Cytoplasmic segment spans residues 410-449; it reads SLPRAWKRFQNRDLDYDDMDEDDPFNPQESKRFVQWQSSI.

This sequence belongs to the tweety family. As to quaternary structure, homotetramer; disulfide-linked. Homodimer.

It is found in the cell membrane. It carries out the reaction chloride(in) = chloride(out). The enzyme catalyses L-glutamate(out) = L-glutamate(in). Functionally, may act as a calcium-independent, swelling-dependent volume-regulated anion channel (VRAC-swell) which plays a pivotal role in the process of regulatory volume decrease (RVD) in the brain through the efflux of anions like chloride and organic osmolytes like glutamate. This is Protein tweety homolog 1 (ttyh1) from Xenopus tropicalis (Western clawed frog).